The following is a 374-amino-acid chain: tRNA-specific 2-thiouridylase MnmA (374 aa).

ATP contacts are provided by residues 12 to 19 (GMSGGVDS) and methionine 38. The interaction with target base in tRNA stretch occupies residues 98-100 (NPD). The active-site Nucleophile is the cysteine 103. Cysteine 103 and cysteine 202 are disulfide-bonded. Glycine 128 serves as a coordination point for ATP. Residues 152–154 (KDQ) are interaction with tRNA. The active-site Cysteine persulfide intermediate is the cysteine 202. Residues 316–317 (RY) are interaction with tRNA.

It belongs to the MnmA/TRMU family.

The protein resides in the cytoplasm. It carries out the reaction S-sulfanyl-L-cysteinyl-[protein] + uridine(34) in tRNA + AH2 + ATP = 2-thiouridine(34) in tRNA + L-cysteinyl-[protein] + A + AMP + diphosphate + H(+). Its function is as follows. Catalyzes the 2-thiolation of uridine at the wobble position (U34) of tRNA, leading to the formation of s(2)U34. The protein is tRNA-specific 2-thiouridylase MnmA of Vibrio parahaemolyticus serotype O3:K6 (strain RIMD 2210633).